A 150-amino-acid polypeptide reads, in one-letter code: UPF0756 membrane protein ECA1265 (150 aa).

A run of 4 helical transmembrane segments spans residues 1–21 (MAYI…GIIS), 51–71 (YGLS…IASG), 82–102 (FLHW…WLGG), and 127–147 (ALFR…SLLI).

This sequence belongs to the UPF0756 family.

It is found in the cell membrane. This is UPF0756 membrane protein ECA1265 from Pectobacterium atrosepticum (strain SCRI 1043 / ATCC BAA-672) (Erwinia carotovora subsp. atroseptica).